The following is a 373-amino-acid chain: MSGKAQLVLEDGRVFTGTAFGAIGQTLGEAVFSTGMSGYQETLTDPSYHRQIVVATAPQIGNTGWNGEDAESRGDKIWVAGYAVRDPSPRVSNWRATGSLEDELIRQRIVGIARIDTRAVVRHLRTRGSMKAGVFSGDALADPDELVQRVRGQQSMLGADLAGEVSTPDAYIVEPEGPPRFTVAALDLGIKTNTPRNFARRGIRSHVLPSSATFEQIADLRPDGVFLSNGPGDPATADHIVAVTREVLGAGIPLFGICFGNQILGRALGLSTYKMVFGHRGINIPVIDHATGRVAVTAQNHGFALQGEAGQSFDTPFGAAVVSHTCANDGVVEGVKLADGRAFSVQYHPEAAAGPHDANYLFDQFIELMEGDR.

Residues 1–179 are CPSase; the sequence is MSGKAQLVLE…AYIVEPEGPP (179 aa). L-glutamine-binding residues include Ser47, Gly230, and Gly232. The region spanning 182–373 is the Glutamine amidotransferase type-1 domain; it reads TVAALDLGIK…QFIELMEGDR (192 aa). Cys258 acts as the Nucleophile in catalysis. 5 residues coordinate L-glutamine: Phe259, Gln262, Asn300, Gly302, and Phe303. Residues His348 and Glu350 contribute to the active site.

Belongs to the CarA family. Composed of two chains; the small (or glutamine) chain promotes the hydrolysis of glutamine to ammonia, which is used by the large (or ammonia) chain to synthesize carbamoyl phosphate. Tetramer of heterodimers (alpha,beta)4.

The catalysed reaction is hydrogencarbonate + L-glutamine + 2 ATP + H2O = carbamoyl phosphate + L-glutamate + 2 ADP + phosphate + 2 H(+). The enzyme catalyses L-glutamine + H2O = L-glutamate + NH4(+). The protein operates within amino-acid biosynthesis; L-arginine biosynthesis; carbamoyl phosphate from bicarbonate: step 1/1. It functions in the pathway pyrimidine metabolism; UMP biosynthesis via de novo pathway; (S)-dihydroorotate from bicarbonate: step 1/3. Functionally, small subunit of the glutamine-dependent carbamoyl phosphate synthetase (CPSase). CPSase catalyzes the formation of carbamoyl phosphate from the ammonia moiety of glutamine, carbonate, and phosphate donated by ATP, constituting the first step of 2 biosynthetic pathways, one leading to arginine and/or urea and the other to pyrimidine nucleotides. The small subunit (glutamine amidotransferase) binds and cleaves glutamine to supply the large subunit with the substrate ammonia. The sequence is that of Carbamoyl phosphate synthase small chain from Mycolicibacterium paratuberculosis (strain ATCC BAA-968 / K-10) (Mycobacterium paratuberculosis).